The chain runs to 79 residues: UPF0180 protein BcerKBAB4_1316 (79 aa).

It belongs to the UPF0180 family.

The chain is UPF0180 protein BcerKBAB4_1316 from Bacillus mycoides (strain KBAB4) (Bacillus weihenstephanensis).